Reading from the N-terminus, the 498-residue chain is ATP synthase subunit beta, chloroplastic (498 aa).

T6 is subject to Phosphothreonine. At S13 the chain carries Phosphoserine. 172–179 serves as a coordination point for ATP; it reads GGAGVGKT.

It belongs to the ATPase alpha/beta chains family. F-type ATPases have 2 components, CF(1) - the catalytic core - and CF(0) - the membrane proton channel. CF(1) has five subunits: alpha(3), beta(3), gamma(1), delta(1), epsilon(1). CF(0) has four main subunits: a(1), b(1), b'(1) and c(9-12).

It localises to the plastid. The protein resides in the chloroplast thylakoid membrane. The catalysed reaction is ATP + H2O + 4 H(+)(in) = ADP + phosphate + 5 H(+)(out). Functionally, produces ATP from ADP in the presence of a proton gradient across the membrane. The catalytic sites are hosted primarily by the beta subunits. This Brassica napus (Rape) protein is ATP synthase subunit beta, chloroplastic.